A 377-amino-acid polypeptide reads, in one-letter code: P2Y purinoceptor 2 (377 aa).

Residues 1-32 (MAADLGPWNDTINGTWDGDELGYRCRFNEDFK) lie on the Extracellular side of the membrane. N-linked (GlcNAc...) asparagine glycans are attached at residues asparagine 9 and asparagine 13. Residues 33–59 (YVLLPVSYGVVCVPGLCLNAVALYIFL) form a helical membrane-spanning segment. Over 60–70 (CRLKTWNASTT) the chain is Cytoplasmic. A helical transmembrane segment spans residues 71–93 (YMFHLAVSDALYAASLPLLVYYY). Residues 94–110 (ARGDHWPFSTVLCKLVR) are Extracellular-facing. A disulfide bridge links cysteine 106 with cysteine 183. The helical transmembrane segment at 111–129 (FLFYTNLYCSILFLTCISV) threads the bilayer. At 130–152 (HRCLGVLRPLRSLRWGRARYARR) the chain is on the cytoplasmic side. Residues 153–172 (VAGAVWVLVLACQAPVLYFV) traverse the membrane as a helical segment. Residues 173–194 (TTSARGGRVTCHDTSAPELFSR) are Extracellular-facing. Residues 195-220 (FVAYSSVMLGLLFAVPFAVILVCYVL) traverse the membrane as a helical segment. The Cytoplasmic segment spans residues 221 to 246 (MARRLLKPAYGTSGGLPRAKRKSVRT). A helical membrane pass occupies residues 247 to 269 (IAVVLAVFALCFLPFHVTRTLYY). At 270 to 287 (SFRSLDLSCHTLNAINMA) the chain is on the extracellular side. Residues 288–309 (YKVTRPLASANSCLDPVLYFLA) traverse the membrane as a helical segment. Residues 310 to 377 (GQRLVRFARD…GSENTKDIRL (68 aa)) are Cytoplasmic-facing. The disordered stretch occupies residues 318-377 (RDAKPPTGPSPATPARRRLGLRRSDRTDMQRIEDVLGSSEDSRRTESTPAGSENTKDIRL). Basic and acidic residues predominate over residues 339–363 (RRSDRTDMQRIEDVLGSSEDSRRTE).

This sequence belongs to the G-protein coupled receptor 1 family. As to expression, spleen, testis, kidney, liver, lung, heart and brain.

It is found in the cell membrane. In terms of biological role, receptor for ATP and UTP coupled to G-proteins that activate a phosphatidylinositol-calcium second messenger system. The affinity range is UTP = ATP &gt; ATP-gamma-S &gt;&gt; 2-methylthio-ATP = ADP. This Homo sapiens (Human) protein is P2Y purinoceptor 2 (P2RY2).